Consider the following 516-residue polypeptide: 2-isopropylmalate synthase (516 aa).

One can recognise a Pyruvate carboxyltransferase domain in the interval 8–270 (IYIFDTTLRD…YTGIKTESIY (263 aa)). The Mn(2+) site is built by aspartate 17, histidine 205, histidine 207, and asparagine 241. The segment at 394–516 (KLIYLNVVSG…DAGKIKSEYE (123 aa)) is regulatory domain.

It belongs to the alpha-IPM synthase/homocitrate synthase family. LeuA type 1 subfamily. In terms of assembly, homodimer. Mn(2+) serves as cofactor.

The protein resides in the cytoplasm. The catalysed reaction is 3-methyl-2-oxobutanoate + acetyl-CoA + H2O = (2S)-2-isopropylmalate + CoA + H(+). It functions in the pathway amino-acid biosynthesis; L-leucine biosynthesis; L-leucine from 3-methyl-2-oxobutanoate: step 1/4. Its function is as follows. Catalyzes the condensation of the acetyl group of acetyl-CoA with 3-methyl-2-oxobutanoate (2-ketoisovalerate) to form 3-carboxy-3-hydroxy-4-methylpentanoate (2-isopropylmalate). The chain is 2-isopropylmalate synthase from Syntrophus aciditrophicus (strain SB).